Here is a 222-residue protein sequence, read N- to C-terminus: Riboflavin kinase (222 aa).

Residues 1-92 (MVEAEDLQSL…VRIFNPDQRG (92 aa)) form a unknown region. A riboflavin kinase region spans residues 93–222 (YTLTGTVISG…DTIEVEITHD (130 aa)). A CDP-binding site is contributed by 102-107 (GLGEGR). The Mg(2+) site is built by Thr-131 and Asn-133. 2 residues coordinate FMN: Thr-188 and Glu-196. 201–204 (CELR) contacts CDP.

Belongs to the archaeal riboflavin kinase family. It depends on Mg(2+) as a cofactor.

The catalysed reaction is riboflavin + CTP = CDP + FMN + H(+). Its pathway is cofactor biosynthesis; FMN biosynthesis; FMN from riboflavin (CTP route): step 1/1. Functionally, catalyzes the CTP-dependent phosphorylation of riboflavin (vitamin B2) to form flavin mononucleotide (FMN). This Methanoculleus marisnigri (strain ATCC 35101 / DSM 1498 / JR1) protein is Riboflavin kinase (ribK).